Reading from the N-terminus, the 257-residue chain is MALPDFTMHQLLEAGVHFGHQTHRWNPKMTPYIYGQRNNIHIIDLAQTVPLLHQALKLVSDTVARGGRILFVGTKRQASDIIADAANRSAQYYVNARWLGGMLTNWKTISNSIQRLRKLDKILAAEAQGFTKKERLNLERDREKLNRALGGIKDMGSVPDLIFIIDTNKENIAIQEAKRLGIPVIAIIDTNCDPDNVDHPIPGNDDASRAISLYCDLFARAALDGIARQQGAMGIDLGAQADAPVDPVLENTAPVSE.

It belongs to the universal ribosomal protein uS2 family.

In Bartonella henselae (strain ATCC 49882 / DSM 28221 / CCUG 30454 / Houston 1) (Rochalimaea henselae), this protein is Small ribosomal subunit protein uS2.